The primary structure comprises 711 residues: Dendrin (711 aa).

Disordered stretches follow at residues 1–22, 49–273, 324–446, and 479–677; these read MLDG…DEES, APSR…KKRL, DLNS…SQGL, and PSGV…AELS. Over residues 75 to 84 the composition is skewed to pro residues; sequence PGSPQPPPRR. Residues 102–134 are a coiled coil; it reads LAEVRAREQEKRKAASQEREAKETERKRRKAGG. Over residues 105–127 the composition is skewed to basic and acidic residues; it reads VRAREQEKRKAASQEREAKETER. The tract at residues 113-131 is nuclear localization; it reads RKAASQEREAKETERKRRK. Residues 150-161 are compositionally biased toward low complexity; the sequence is APRVAQLAGLPA. An interaction with MAGI2 region spans residues 186–236; sequence GSAWAGPWGGRRPGPPSYEAHLLLRGSAGTAPRRRWDRPPPYVAPPSYEGP. Low complexity-rich tracts occupy residues 252–262 and 346–356; these read PTSSAPAATPA and APAGSATAAPC. Residues 341-436 are interaction with ACTN1; that stretch reads AGTEIAPAGS…LEGWKATRRA (96 aa). A Phosphoserine modification is found at Ser-389. The interval 408-709 is interaction with CD2AP and NPHS1; sequence GGTGWRESLG…IRGTQQGNRK (302 aa). A compositionally biased stretch (basic and acidic residues) spans 529-546; it reads GEAEGGRPGDSTLEERTF.

As to quaternary structure, forms a ternary complex with MAGI2 and SH3KBP1; recruits DDN to the cytoplasm. Interacts with MAGI1. Interacts with ACTN1 and may interact with WWC1. Interacts with the podocyte slit diaphragm proteins CD2AP, NPHS1 and NPHS2; the interaction with CD2AP and NPHS1 is direct. As to expression, specifically expressed in brain and kidney. Expressed in kidney glomerular capillary loops (at protein level).

It is found in the cell projection. It localises to the dendritic spine membrane. Its subcellular location is the cytoplasm. The protein resides in the endoplasmic reticulum membrane. The protein localises to the perikaryon. It is found in the nucleus. In terms of biological role, promotes apoptosis of kidney glomerular podocytes. Podocytes are highly specialized cells essential to the ultrafiltration of blood, resulting in the extraction of urine and the retention of protein. The sequence is that of Dendrin (DDN) from Homo sapiens (Human).